A 162-amino-acid chain; its full sequence is Probable chemoreceptor glutamine deamidase CheD (162 aa).

Belongs to the CheD family.

It catalyses the reaction L-glutaminyl-[protein] + H2O = L-glutamyl-[protein] + NH4(+). Its function is as follows. Probably deamidates glutamine residues to glutamate on methyl-accepting chemotaxis receptors (MCPs), playing an important role in chemotaxis. The chain is Probable chemoreceptor glutamine deamidase CheD from Pyrococcus horikoshii (strain ATCC 700860 / DSM 12428 / JCM 9974 / NBRC 100139 / OT-3).